A 418-amino-acid chain; its full sequence is Putative competence-damage inducible protein (418 aa).

It belongs to the CinA family.

The protein is Putative competence-damage inducible protein of Streptococcus pneumoniae serotype 2 (strain D39 / NCTC 7466).